Reading from the N-terminus, the 190-residue chain is Protein GrpE (190 aa).

Residues 1 to 18 (MTETPNTSSEEIQTSEPS) show a composition bias toward polar residues. The disordered stretch occupies residues 1 to 21 (MTETPNTSSEEIQTSEPSPDN).

This sequence belongs to the GrpE family. In terms of assembly, homodimer.

It localises to the cytoplasm. Functionally, participates actively in the response to hyperosmotic and heat shock by preventing the aggregation of stress-denatured proteins, in association with DnaK and GrpE. It is the nucleotide exchange factor for DnaK and may function as a thermosensor. Unfolded proteins bind initially to DnaJ; upon interaction with the DnaJ-bound protein, DnaK hydrolyzes its bound ATP, resulting in the formation of a stable complex. GrpE releases ADP from DnaK; ATP binding to DnaK triggers the release of the substrate protein, thus completing the reaction cycle. Several rounds of ATP-dependent interactions between DnaJ, DnaK and GrpE are required for fully efficient folding. In Chlamydia trachomatis serovar A (strain ATCC VR-571B / DSM 19440 / HAR-13), this protein is Protein GrpE.